Reading from the N-terminus, the 421-residue chain is Tubulin gamma-3 chain (421 aa).

94–100 (AGGTGSG) is a binding site for GTP.

It belongs to the tubulin family.

It localises to the cytoplasm. Its subcellular location is the cytoskeleton. It is found in the microtubule organizing center. Tubulin is the major constituent of microtubules. The gamma chain is found at microtubule organizing centers (MTOC) such as the spindle poles, suggesting that it is involved in the minus-end nucleation of microtubule assembly. The chain is Tubulin gamma-3 chain (TUBG3) from Zea mays (Maize).